The following is a 334-amino-acid chain: Ketol-acid reductoisomerase (NADP(+)) (334 aa).

Positions 1-181 (MTTVYYDQDV…GATRAGVIET (181 aa)) constitute a KARI N-terminal Rossmann domain. Residues 25-28 (YGSQ), arginine 48, serine 52, and 82-85 (DEIQ) contribute to the NADP(+) site. The active site involves histidine 107. Glycine 133 is a binding site for NADP(+). The KARI C-terminal knotted domain occupies 182–327 (TFKEETETDL…RELREMMPFI (146 aa)). Positions 190, 194, 226, and 230 each coordinate Mg(2+). Serine 251 lines the substrate pocket.

This sequence belongs to the ketol-acid reductoisomerase family. Requires Mg(2+) as cofactor.

The enzyme catalyses (2R)-2,3-dihydroxy-3-methylbutanoate + NADP(+) = (2S)-2-acetolactate + NADPH + H(+). It catalyses the reaction (2R,3R)-2,3-dihydroxy-3-methylpentanoate + NADP(+) = (S)-2-ethyl-2-hydroxy-3-oxobutanoate + NADPH + H(+). Its pathway is amino-acid biosynthesis; L-isoleucine biosynthesis; L-isoleucine from 2-oxobutanoate: step 2/4. It participates in amino-acid biosynthesis; L-valine biosynthesis; L-valine from pyruvate: step 2/4. In terms of biological role, involved in the biosynthesis of branched-chain amino acids (BCAA). Catalyzes an alkyl-migration followed by a ketol-acid reduction of (S)-2-acetolactate (S2AL) to yield (R)-2,3-dihydroxy-isovalerate. In the isomerase reaction, S2AL is rearranged via a Mg-dependent methyl migration to produce 3-hydroxy-3-methyl-2-ketobutyrate (HMKB). In the reductase reaction, this 2-ketoacid undergoes a metal-dependent reduction by NADPH to yield (R)-2,3-dihydroxy-isovalerate. The sequence is that of Ketol-acid reductoisomerase (NADP(+)) from Staphylococcus aureus (strain USA300).